Here is a 460-residue protein sequence, read N- to C-terminus: Phosphoglucomutase (460 aa).

The active-site Phosphoserine intermediate is serine 103. Serine 103 contributes to the Mg(2+) binding site. Substrate is bound by residues 103–104 (SH) and lysine 113. Residues aspartate 239, aspartate 241, and aspartate 243 each coordinate Mg(2+). Substrate-binding positions include 243–244 (DR), threonine 303, and 322–324 (EMS).

It belongs to the phosphohexose mutase family. It depends on Mg(2+) as a cofactor.

Its subcellular location is the cytoplasm. It catalyses the reaction alpha-D-glucose 1-phosphate = alpha-D-glucose 6-phosphate. In terms of biological role, this enzyme participates in both the breakdown and synthesis of glucose. The chain is Phosphoglucomutase (pgm) from Neisseria gonorrhoeae.